A 1756-amino-acid polypeptide reads, in one-letter code: Protein TIC 214 (1756 aa).

6 consecutive transmembrane segments (helical) span residues V18–G38, G54–M74, I79–F99, L128–L148, I163–F183, and F210–L230. Residues K1469 to K1504 form a disordered region. Basic and acidic residues predominate over residues K1471–Q1482. Over residues E1484–Q1499 the composition is skewed to acidic residues.

It belongs to the TIC214 family. As to quaternary structure, part of the Tic complex.

The protein resides in the plastid. Its subcellular location is the chloroplast inner membrane. Involved in protein precursor import into chloroplasts. May be part of an intermediate translocation complex acting as a protein-conducting channel at the inner envelope. The protein is Protein TIC 214 of Pinus thunbergii (Japanese black pine).